The primary structure comprises 466 residues: UDP-N-acetylmuramoylalanine--D-glutamate ligase (466 aa).

127-133 is a binding site for ATP; the sequence is GSNGKST.

This sequence belongs to the MurCDEF family.

The protein localises to the cytoplasm. The enzyme catalyses UDP-N-acetyl-alpha-D-muramoyl-L-alanine + D-glutamate + ATP = UDP-N-acetyl-alpha-D-muramoyl-L-alanyl-D-glutamate + ADP + phosphate + H(+). It functions in the pathway cell wall biogenesis; peptidoglycan biosynthesis. In terms of biological role, cell wall formation. Catalyzes the addition of glutamate to the nucleotide precursor UDP-N-acetylmuramoyl-L-alanine (UMA). This chain is UDP-N-acetylmuramoylalanine--D-glutamate ligase, found in Ruegeria pomeroyi (strain ATCC 700808 / DSM 15171 / DSS-3) (Silicibacter pomeroyi).